The primary structure comprises 511 residues: Bifunctional purine biosynthesis protein PurH (511 aa).

The 145-residue stretch at 1–145 (MKKRALVSVS…KNHKFVSVIV (145 aa)) folds into the MGS-like domain.

It belongs to the PurH family.

The catalysed reaction is (6R)-10-formyltetrahydrofolate + 5-amino-1-(5-phospho-beta-D-ribosyl)imidazole-4-carboxamide = 5-formamido-1-(5-phospho-D-ribosyl)imidazole-4-carboxamide + (6S)-5,6,7,8-tetrahydrofolate. The enzyme catalyses IMP + H2O = 5-formamido-1-(5-phospho-D-ribosyl)imidazole-4-carboxamide. It participates in purine metabolism; IMP biosynthesis via de novo pathway; 5-formamido-1-(5-phospho-D-ribosyl)imidazole-4-carboxamide from 5-amino-1-(5-phospho-D-ribosyl)imidazole-4-carboxamide (10-formyl THF route): step 1/1. It functions in the pathway purine metabolism; IMP biosynthesis via de novo pathway; IMP from 5-formamido-1-(5-phospho-D-ribosyl)imidazole-4-carboxamide: step 1/1. The sequence is that of Bifunctional purine biosynthesis protein PurH from Bacillus cereus (strain Q1).